The primary structure comprises 310 residues: Pseudouridine-5'-phosphate glycosidase (310 aa).

The active-site Proton donor is Glu-26. Substrate contacts are provided by Lys-87 and Val-107. A Mn(2+)-binding site is contributed by Asp-139. A substrate-binding site is contributed by 141-143 (SAD). Catalysis depends on Lys-160, which acts as the Nucleophile.

This sequence belongs to the pseudouridine-5'-phosphate glycosidase family. Homotrimer. It depends on Mn(2+) as a cofactor.

The catalysed reaction is D-ribose 5-phosphate + uracil = psi-UMP + H2O. Its function is as follows. Catalyzes the reversible cleavage of pseudouridine 5'-phosphate (PsiMP) to ribose 5-phosphate and uracil. Functions biologically in the cleavage direction, as part of a pseudouridine degradation pathway. The polypeptide is Pseudouridine-5'-phosphate glycosidase (Roseobacter denitrificans (strain ATCC 33942 / OCh 114) (Erythrobacter sp. (strain OCh 114))).